A 318-amino-acid chain; its full sequence is Thiohydrolase aneE (318 aa).

The protein belongs to the polyketide transferase af380 family.

The enzyme catalyses aculene D + L-prolyl-[peptidyl-carrier protein] = aculene B + holo-[peptidyl-carrier protein]. It carries out the reaction aculene C + L-prolyl-[peptidyl-carrier protein] = aculene A + holo-[peptidyl-carrier protein]. The protein operates within secondary metabolite biosynthesis. Its function is as follows. Thiohydrolase; part of the gene cluster that mediates the biosynthesis of aculenes, a unique type of norsesquiterpenes that contain a nordaucane skeleton linked to an L-proline moiety and are of mixed biosynthetic origin. The pathway begins with the synthesis of dauca-4,7-diene by the terpene cyclase aneC using farnesyl pyrophosphate (FPP) as substrate. The cytochrome P450 monooxygenase aneF then performs the initial oxidation at C-12 of dauca-4,7-diene to yield asperaculane D. Asperaculane D is substrate of the cytochrome P450 monooxygenase aneD for C-10 hydroxylation to yield asperaculane E. The cytochrome P450 monooxygenase aneG then converts asperaculane E into aculene D via C-2 oxidation. The monomodular nonribosomal peptide synthtase aneB adenylates L-proline and the thiohydrolase aneE transfers this activated L-proline derivative to aculenes D and C to produce respectively aculenes B and A. The dioxygenase aneA converts aculene D into aculene C, and aculene B into aculene A by introducing the 5,6-alkene moiety. Asperculanes A, B, C and F, as well as 14-prolyl asperculane C, might be shunt products of the pathway. The chain is Thiohydrolase aneE from Aspergillus aculeatus (strain ATCC 16872 / CBS 172.66 / WB 5094).